We begin with the raw amino-acid sequence, 440 residues long: Chromosome partition protein MukF (440 aa).

The tract at residues 208-236 (LSETSGTLRELQDTLDAAGDKLQANLLRI) is leucine-zipper.

This sequence belongs to the MukF family. As to quaternary structure, interacts, and probably forms a ternary complex, with MukE and MukB via its C-terminal region. The complex formation is stimulated by calcium or magnesium. It is required for an interaction between MukE and MukB.

The protein localises to the cytoplasm. It is found in the nucleoid. In terms of biological role, involved in chromosome condensation, segregation and cell cycle progression. May participate in facilitating chromosome segregation by condensation DNA from both sides of a centrally located replisome during cell division. Not required for mini-F plasmid partitioning. Probably acts via its interaction with MukB and MukE. Overexpression results in anucleate cells. It has a calcium binding activity. This is Chromosome partition protein MukF from Klebsiella pneumoniae subsp. pneumoniae (strain ATCC 700721 / MGH 78578).